We begin with the raw amino-acid sequence, 283 residues long: Putative casein kinase II subunit beta-4 (283 aa).

Disordered regions lie at residues 1-23 and 35-92; these read MYKDRSGGGIMGGGGSSRSEILG and LDKH…SEGD. Over residues 7 to 16 the composition is skewed to gly residues; that stretch reads GGGIMGGGGS. Residues 58–70 show a composition bias toward polar residues; sequence VPSTSTAKSQLHS.

It belongs to the casein kinase 2 subunit beta family. In terms of assembly, heterotetramer of two catalytic alpha subunits and two regulatory beta subunits. Phosphorylated by alpha subunit.

The protein localises to the cytoplasm. It is found in the cytosol. Its function is as follows. Plays a complex role in regulating the basal catalytic activity of the alpha subunit. The tetrameric holoenzyme CK2, composed of two alpha and two beta subunits, phosphorylates the transcription factor PIF1 after an exposure to light, resulting in a proteasome-dependent degradation of PIF1 and promotion of photomorphogenesis. CK2 phosphorylates translation initiation factors. May participate in the regulation of the initiation of translation. This is Putative casein kinase II subunit beta-4 from Arabidopsis thaliana (Mouse-ear cress).